A 492-amino-acid polypeptide reads, in one-letter code: Protein nucleotidyltransferase YdiU (492 aa).

8 residues coordinate ATP: Gly-88, Gly-90, Arg-91, Lys-111, Asp-123, Gly-124, Arg-174, and Arg-181. Asp-250 functions as the Proton acceptor in the catalytic mechanism. 2 residues coordinate Mg(2+): Asn-251 and Asp-260. Asp-260 is an ATP binding site.

This sequence belongs to the SELO family. The cofactor is Mg(2+). Requires Mn(2+) as cofactor.

It carries out the reaction L-seryl-[protein] + ATP = 3-O-(5'-adenylyl)-L-seryl-[protein] + diphosphate. It catalyses the reaction L-threonyl-[protein] + ATP = 3-O-(5'-adenylyl)-L-threonyl-[protein] + diphosphate. The catalysed reaction is L-tyrosyl-[protein] + ATP = O-(5'-adenylyl)-L-tyrosyl-[protein] + diphosphate. The enzyme catalyses L-histidyl-[protein] + UTP = N(tele)-(5'-uridylyl)-L-histidyl-[protein] + diphosphate. It carries out the reaction L-seryl-[protein] + UTP = O-(5'-uridylyl)-L-seryl-[protein] + diphosphate. It catalyses the reaction L-tyrosyl-[protein] + UTP = O-(5'-uridylyl)-L-tyrosyl-[protein] + diphosphate. Nucleotidyltransferase involved in the post-translational modification of proteins. It can catalyze the addition of adenosine monophosphate (AMP) or uridine monophosphate (UMP) to a protein, resulting in modifications known as AMPylation and UMPylation. This is Protein nucleotidyltransferase YdiU from Rhodopseudomonas palustris (strain HaA2).